The primary structure comprises 154 residues: General odorant-binding protein 83a (154 aa).

Residues 1-33 (MALNGFGRRVSASVLLIALSLLSGALILPPAAA) form the signal peptide. Cystine bridges form between C55/C86, C82/C133, and C124/C142.

Belongs to the PBP/GOBP family. In terms of tissue distribution, in the ventrolateral region of the antenna, expressed in two distinct types of olfactory hairs: in most sensilla trichodea and in a subset of the small sensilla basiconica (at protein level).

It localises to the secreted. The polypeptide is General odorant-binding protein 83a (Obp83a) (Drosophila melanogaster (Fruit fly)).